The chain runs to 492 residues: Cytochrome P450 2B12 (492 aa).

The residue at position 129 (Ser-129) is a Phosphoserine. Residue Cys-437 coordinates heme.

Belongs to the cytochrome P450 family. Heme is required as a cofactor. As to expression, preputial gland, but not in liver.

The protein resides in the endoplasmic reticulum membrane. Its subcellular location is the microsome membrane. The catalysed reaction is an organic molecule + reduced [NADPH--hemoprotein reductase] + O2 = an alcohol + oxidized [NADPH--hemoprotein reductase] + H2O + H(+). In terms of biological role, cytochromes P450 are a group of heme-thiolate monooxygenases. In liver microsomes, this enzyme is involved in an NADPH-dependent electron transport pathway. This isozyme seems responsible for metabolism of 2,2',4,4',5,5'-hexachlorobiphenyl. In Rattus norvegicus (Rat), this protein is Cytochrome P450 2B12 (Cyp2b12).